The chain runs to 101 residues: Urease subunit beta (101 aa).

Belongs to the urease beta subunit family. Heterotrimer of UreA (gamma), UreB (beta) and UreC (alpha) subunits. Three heterotrimers associate to form the active enzyme.

It is found in the cytoplasm. The catalysed reaction is urea + 2 H2O + H(+) = hydrogencarbonate + 2 NH4(+). It participates in nitrogen metabolism; urea degradation; CO(2) and NH(3) from urea (urease route): step 1/1. The sequence is that of Urease subunit beta from Haemophilus influenzae (strain 86-028NP).